Consider the following 632-residue polypeptide: PAN2-PAN3 deadenylation complex subunit PAN3 (632 aa).

2 disordered regions span residues 1–22 (MQPG…PHQL) and 99–127 (PTFG…PPTL). Basic residues predominate over residues 107-116 (MNHRASHHHQ). Residues 117–127 (SPQMAQQPPTL) are compositionally biased toward polar residues. The interval 223–494 (KADSAIIGDI…TINEIMPMIG (272 aa)) is pseudokinase domain. ATP-binding positions include Arg270, 321–328 (DYYPLAGT), and 397–398 (NK). Positions 495-533 (GRFFTVMENMQAKTDVLEAELSREMENGRLFRLVAKMNT) form a coiled coil. Residues 534–632 (VLERVEHGTD…LLGTNMMLHR (99 aa)) form a knob domain region.

Belongs to the protein kinase superfamily. PAN3 family. In terms of assembly, homodimer. Forms a heterotrimer with a catalytic subunit PAN2 to form the poly(A)-nuclease (PAN) deadenylation complex. Interacts (via PAM-2 motif) with poly(A)-binding protein (via PABC domain), conferring substrate specificity of the enzyme complex. Interacts with the GW182 family protein ain-1. As to expression, highly expressed in germ cells.

It localises to the cytoplasm. It is found in the P-body. Regulatory subunit of the poly(A)-nuclease (PAN) deadenylation complex, one of two cytoplasmic mRNA deadenylases involved in general and miRNA-mediated mRNA turnover. PAN specifically shortens poly(A) tails of RNA and the activity is stimulated by poly(A)-binding protein (PABP). PAN deadenylation is followed by rapid degradation of the shortened mRNA tails by the CCR4-NOT complex. Deadenylated mRNAs are then degraded by two alternative mechanisms, namely exosome-mediated 3'-5' exonucleolytic degradation, or deadenylation-dependent mRNA decaping and subsequent 5'-3' exonucleolytic degradation by XRN1. PAN3 acts as a positive regulator for PAN activity, recruiting the catalytic subunit PAN2 to mRNA via its interaction with RNA and PABP, and to miRNA targets via its interaction with GW182 family proteins. Within the PAN complex, may positively regulate fertility. This chain is PAN2-PAN3 deadenylation complex subunit PAN3, found in Caenorhabditis elegans.